Here is a 549-residue protein sequence, read N- to C-terminus: Chaperonin GroEL (549 aa).

ATP is bound by residues 30–33 (TLGP), Lys51, 87–91 (DGTTT), Gly415, 479–481 (NAA), and Asp495.

It belongs to the chaperonin (HSP60) family. In terms of assembly, forms a cylinder of 14 subunits composed of two heptameric rings stacked back-to-back. Interacts with the co-chaperonin GroES.

The protein resides in the cytoplasm. It catalyses the reaction ATP + H2O + a folded polypeptide = ADP + phosphate + an unfolded polypeptide.. In terms of biological role, together with its co-chaperonin GroES, plays an essential role in assisting protein folding. The GroEL-GroES system forms a nano-cage that allows encapsulation of the non-native substrate proteins and provides a physical environment optimized to promote and accelerate protein folding. The polypeptide is Chaperonin GroEL (Leptothrix cholodnii (strain ATCC 51168 / LMG 8142 / SP-6) (Leptothrix discophora (strain SP-6))).